Consider the following 462-residue polypeptide: MDINKVTAVYFVGAGGIGMSALIRYFLAKGKRVGGYDKTPSDLTEELKKEGADIHYEDNVALIGEAFKSPDDTLVVYTPAVPESHTELTYFRAHGFEVMKRARVLGEITKSSRGLCVAGTHGKTTTSSMLAHLLKQSPVDCNAFLGGILKNYESNLMLSDTSDFTVIEADEFDRSFHWLTPYMAVITSADPDHLDIYGTAEAYRESFEKFTSLIRPDGCLLIKKGINVTPRLQEGVKKYTYSVTEIADFYAENIRICDGNITFDFVGPEIRIPDVELGVPVKVNIENGVAAMAIAWLNGVKPEDLKKGMATFAGPRRRFDFHLKTDQVVLIDDYAHHPAELRQSILSVKELYAGRKVTGIFQPHLYTRTRDFAGDFAASLSLLDELILLDIYPAREEPIPGVSSRIIFDKVTIPSKTLCKKEELLDVVAAGKYEVVLMVGAGNIDRLVEPVKEILCKQIRKP.

Residue 119–125 coordinates ATP; sequence GTHGKTT.

The protein belongs to the MurCDEF family.

Its subcellular location is the cytoplasm. The enzyme catalyses UDP-N-acetyl-alpha-D-muramate + L-alanine + ATP = UDP-N-acetyl-alpha-D-muramoyl-L-alanine + ADP + phosphate + H(+). It participates in cell wall biogenesis; peptidoglycan biosynthesis. In terms of biological role, cell wall formation. The polypeptide is UDP-N-acetylmuramate--L-alanine ligase (Parabacteroides distasonis (strain ATCC 8503 / DSM 20701 / CIP 104284 / JCM 5825 / NCTC 11152)).